A 458-amino-acid polypeptide reads, in one-letter code: MNTTNKESTAELNNTESNNNYNNFAENGNIINLKQLKRKLPEELQAQAEELKIENINSLLKQELVFAILKKSVEQGVLIVGEGVLEVLPDGFGFLRSPEVNYLAGPDDIYISPSQIRRFGLRTGDTVEGQIRAPKAGERYFALLKVNRVNFEDPSKAYHRVHFDNLTPLYPDEKLGLELENNSKDSKDFSTRVIELVAPMGKGQRALIVAPPRTGKTVLLQNIAHAITTNNPEVFLIVLLIDERPEEVTDMQRSVRGEVVSSTFDEPASRHVQLAEMVIKKAKRLVEHKKDVVILVDAITRLARAYNTVVPSSGKVLTGGVDANALQRPKRFFGAARNIENGGSLTIIGTALIETGSRMDEVIFEEFKGTGNSEIVLDRKIADKRIYPAIDITRSGTRKEDLLVDKIILNKMWVLRRIIDPMGSSEAIEFLLKKLENTKTNGEFFEMMKSPERPKNGL.

The interval 1-23 (MNTTNKESTAELNNTESNNNYNN) is disordered. Residues 10–23 (AELNNTESNNNYNN) are compositionally biased toward low complexity. One can recognise a Rho RNA-BD domain in the interval 78 to 153 (LIVGEGVLEV…LKVNRVNFED (76 aa)). Residues 201–206 (GKGQRA), 213–218 (RTGKTV), and Arg-244 contribute to the ATP site.

It belongs to the Rho family. In terms of assembly, homohexamer. The homohexamer assembles into an open ring structure.

In terms of biological role, facilitates transcription termination by a mechanism that involves Rho binding to the nascent RNA, activation of Rho's RNA-dependent ATPase activity, and release of the mRNA from the DNA template. The sequence is that of Transcription termination factor Rho from Rickettsia conorii (strain ATCC VR-613 / Malish 7).